The primary structure comprises 800 residues: Mitogen-activated protein kinase kinase kinase 20 (800 aa).

S2 is subject to N-acetylserine. 3 positions are modified to phosphoserine; by autocatalysis: S2, S3, and S7. In terms of domain architecture, Protein kinase spans 16-277; that stretch reads LQFFENCGGG…SLPDKCNSFL (262 aa). Residues 22 to 30 and K45 contribute to the ATP site; that span reads CGGGSFGSV. The active-site Proton acceptor is D133. At T161 the chain carries Phosphothreonine; by autocatalysis. At S165 the chain carries Phosphoserine; by autocatalysis. The residue at position 275 (S275) is a Phosphoserine. Residues 287-308 form a leucine-zipper region; it reads IEATLERLKKLERDLSFKEQEL. A Phosphoserine; by autocatalysis modification is found at S302. Phosphoserine occurs at positions 339, 429, 434, 454, and 567. The 72-residue stretch at 339–410 folds into the SAM domain; sequence WTEDDVYCWV…KSAIEKLTHD (72 aa). T586 bears the Phosphothreonine; by autocatalysis mark. A Phosphoserine; by autocatalysis modification is found at S587. 2 positions are modified to phosphoserine: S593 and S599. The residue at position 628 (T628) is a Phosphothreonine. Phosphoserine occurs at positions 633, 637, and 648. 2 positions are modified to phosphoserine; by autocatalysis: S649 and S660. Residues 652–666 show a composition bias toward polar residues; that stretch reads LNSRDSGFSSGNTDT. The segment at 652–800 is disordered; that stretch reads LNSRDSGFSS…RGDHRGWRNF (149 aa). The residue at position 664 (T664) is a Phosphothreonine; by autocatalysis. A compositionally biased stretch (basic and acidic residues) spans 667-678; that stretch reads SSERGRYSDRSR. A sensing domain (S) region spans residues 670-713; the sequence is RGRYSDRSRNKYGRGSISLNSSPRGRYSGKSQHSTPSRGRYPGK. Phosphoserine is present on S685. 2 stretches are compositionally biased toward polar residues: residues 686-706 and 717-726; these read ISLN…STPS and VSQSALNPHQ. Phosphoserine; by autocatalysis is present on residues S718 and S720. Residues S727 and S733 each carry the phosphoserine modification. The span at 728–738 shows a compositional bias: basic and acidic residues; that stretch reads PDFKRSPRDLH. At T742 the chain carries Phosphothreonine; by autocatalysis. Composition is skewed to basic and acidic residues over residues 750 to 763 and 785 to 800; these read PETD…DSKV and TNKE…WRNF. Positions 774–800 are C-terminal domain (CTD); it reads RKKPHRPSPAKTNKERARGDHRGWRNF.

It belongs to the protein kinase superfamily. STE Ser/Thr protein kinase family. MAP kinase kinase kinase subfamily. Homodimer. Interacts with ZNF33A. Component of a signaling complex containing at least AKAP13, PKN1, MAPK14, MAP3K20 and MAP2K3. Within this complex, AKAP13 interacts directly with PKN1, which in turn recruits MAPK14, MAP2K3 and MAP3K20. Interacts with EIF2AK4/GCN2; promoting EIF2AK4/GCN2 kinase activity. In terms of assembly, interacts with isoform ZAKbeta. As to quaternary structure, interacts with isoform ZAKalpha. Mg(2+) is required as a cofactor. In terms of processing, activated by phosphorylation by PKN1, followed by autophosphorylation on Thr-161 and Ser-165. Autophosphorylation in response to ribotoxic stress promotes dissociation from colliding ribosomes and activation. Ubiquitously expressed. Isoform ZAKbeta is the predominant form in all tissues examined, except for liver, in which isoform ZAKalpha is more highly expressed.

The protein resides in the cytoplasm. Its subcellular location is the nucleus. It catalyses the reaction L-seryl-[protein] + ATP = O-phospho-L-seryl-[protein] + ADP + H(+). The enzyme catalyses L-threonyl-[protein] + ATP = O-phospho-L-threonyl-[protein] + ADP + H(+). With respect to regulation, activated in response to stress, such as ribosomal stress, osmotic shock and ionizing radiation. Activated by phosphorylation by PKN1, followed by autophosphorylation on Thr-161 and Ser-165. Inhibited by nilotinib, sorafenib, dabrafenib, rebastinib and vemurafenib. Selectively inhibited by N-(3)-((1H-Pyrazolo[3,4-b]pyridin-5-yl)ethynyl)benzenesulfonamide compound 3h. Selectively inhibited by 1,2,3-triazole benzenesulfonamides. Functionally, stress-activated component of a protein kinase signal transduction cascade that promotes programmed cell death in response to various stress, such as ribosomal stress, osmotic shock and ionizing radiation. Acts by catalyzing phosphorylation of MAP kinase kinases, leading to activation of the JNK (MAPK8/JNK1, MAPK9/JNK2 and/or MAPK10/JNK3) and MAP kinase p38 (MAPK11, MAPK12, MAPK13 and/or MAPK14) pathways. Activates JNK through phosphorylation of MAP2K4/MKK4 and MAP2K7/MKK7, and MAP kinase p38 gamma (MAPK12) via phosphorylation of MAP2K3/MKK3 and MAP2K6/MKK6. Involved in stress associated with adrenergic stimulation: contributes to cardiac decompensation during periods of acute cardiac stress. May be involved in regulation of S and G2 cell cycle checkpoint by mediating phosphorylation of CHEK2. In terms of biological role, key component of the stress-activated protein kinase signaling cascade in response to ribotoxic stress or UV-B irradiation. Acts as the proximal sensor of ribosome collisions during the ribotoxic stress response (RSR): directly binds to the ribosome by inserting its flexible C-terminus into the ribosomal intersubunit space, thereby acting as a sentinel for colliding ribosomes. Upon ribosome collisions, activates either the stress-activated protein kinase signal transduction cascade or the integrated stress response (ISR), leading to programmed cell death or cell survival, respectively. Dangerous levels of ribosome collisions trigger the autophosphorylation and activation of MAP3K20, which dissociates from colliding ribosomes and phosphorylates MAP kinase kinases, leading to activation of the JNK and MAP kinase p38 pathways that promote programmed cell death. Less dangerous levels of ribosome collisions trigger the integrated stress response (ISR): MAP3K20 activates EIF2AK4/GCN2 independently of its protein-kinase activity, promoting EIF2AK4/GCN2-mediated phosphorylation of EIF2S1/eIF-2-alpha. Also part of the stress-activated protein kinase signaling cascade triggering the NLRP1 inflammasome in response to UV-B irradiation: ribosome collisions activate MAP3K20, which directly phosphorylates NLRP1, leading to activation of the NLRP1 inflammasome and subsequent pyroptosis. NLRP1 is also phosphorylated by MAP kinase p38 downstream of MAP3K20. Also acts as a histone kinase by phosphorylating histone H3 at 'Ser-28' (H3S28ph). Its function is as follows. Isoform that lacks the C-terminal region that mediates ribosome-binding: does not act as a sensor of ribosome collisions in response to ribotoxic stress. May act as an antagonist of isoform ZAKalpha: interacts with isoform ZAKalpha, leading to decrease the expression of isoform ZAKalpha. This Homo sapiens (Human) protein is Mitogen-activated protein kinase kinase kinase 20.